A 4080-amino-acid polypeptide reads, in one-letter code: Hybrid PKS-NRPS synthetase poxE (4080 aa).

Residues 8–442 form the Ketosynthase family 3 (KS3) domain; sequence REPIAIVGSG…GTNAHAIIEA (435 aa). Active-site for beta-ketoacyl synthase activity residues include Cys-181, His-320, and His-362. The tract at residues 554 to 878 is malonyl-CoA:ACP transacylase (MAT) domain; it reads VFTGQGAQWA…QRGMNDVEAM (325 aa). The tract at residues 944–1078 is N-terminal hotdog fold; sequence HPILGTRCPD…GRLVITYGPV (135 aa). Residues 944–1246 enclose the PKS/mFAS DH domain; the sequence is HPILGTRCPD…AVPLEATNAD (303 aa). The tract at residues 945–1243 is dehydratase (DH) domain; that stretch reads PILGTRCPDG…GIHAVPLEAT (299 aa). His-976 functions as the Proton acceptor; for dehydratase activity in the catalytic mechanism. The C-terminal hotdog fold stretch occupies residues 1093–1246; that stretch reads MVDVPSERFY…AVPLEATNAD (154 aa). The active-site Proton donor; for dehydratase activity is Asp-1152. The methyltransferase (MT) domain stretch occupies residues 1400–1585; sequence HFSDYLASVV…GVDTFTSDAD (186 aa). The tract at residues 2118 to 2292 is ketoreductase (KR)domain; that stretch reads TYWLVGLTGS…AGSVMNIGAI (175 aa). Positions 2399–2478 are peptidyl carrier protein; the sequence is TTDEIYEVIK…TIGEIIKFVL (80 aa). The Carrier 1 domain maps to 2405 to 2481; it reads EVIKECFIVK…EIIKFVLEKL (77 aa). The residue at position 2441 (Ser-2441) is an O-(pantetheine 4'-phosphoryl)serine. The interval 2488–2569 is disordered; the sequence is SLGLSPPTGA…AASPSIHTEE (82 aa). Over residues 2511–2525 the composition is skewed to basic and acidic residues; that stretch reads VVVERRNVPRLEKKI. Residues 2528–2545 show a composition bias toward low complexity; that stretch reads SAGSRTSSSVTGTSKSVS. The span at 2551 to 2565 shows a compositional bias: polar residues; sequence DTASSQTSEAASPSI. The interval 2607-3036 is condensation; it reads KEPLSFGQSR…DSKQPGGHVS (430 aa). Residues 3069 to 3478 form an adenylation region; it reads DMAKQYPQKL…DGRLRIEGRI (410 aa). One can recognise a Carrier 2 domain in the interval 3593–3673; sequence AHLNEAQAQM…KMALLIKPQE (81 aa). Residues 3598-3670 are thiolation; sequence AQAQMVQLWE…TLEKMALLIK (73 aa). An O-(pantetheine 4'-phosphoryl)serine modification is found at Ser-3633. A reductase (RED) domain region spans residues 3740–3959; that stretch reads LTGATGFIGQ…DFVPVEQVVR (220 aa).

In the C-terminal section; belongs to the NRP synthetase family.

It functions in the pathway secondary metabolite biosynthesis. In terms of biological role, hybrid PKS-NRPS synthetase; part of the gene cluster that mediates the biosynthesis of oxaleimides, cytotoxic compounds containing an unusual disubstituted succinimide moiety. The first step of the pathway is provided by the HR-PKS poxF that serves in a new mode of collaborative biosynthesis with the PKS-NRPS poxE, by providing the olefin containing amino acid substrate via the synthesis of an ACP-bound dec-4-enoate. The cytochrome P450 monooxygenase poxM-catalyzed oxidation at the alpha-position creates the enzyme-bound 2-hydroxydec-4-enoyl-ACP thioester, which may be prone to spontaneous hydrolysis to yield 2-hydroxydec-4-enoic acid due to increased electrophilicity of the carbonyl. 2-hydroxydec-4-enoic acid can then be further oxidized by poxM to yield the alpha-ketoacid 2-oxodec-4-enoicacid, which is reductively aminated by the aminotransferase poxL to yield (S,E)-2-aminodec-4-enoic acid. The Hybrid PKS-NRPS synthetase poxE then performs condensation between the octaketide product of its PKS modules and the amino group of (S,E)-2-aminodec-4-enoic acid which is activated and incorporated by the adenylation domain. The resulting aminoacyl product can be cyclized by the Diels-Alderase PoxQ and reductively released by the reductive (R) domain of poxE to yield an aldehyde intermediate. The released aldehyde is then substrate for a Knoevenagel condensation by the hydrolyase poxO followed by an oxidation at the 5-position of the pyrrolidone ring. The presence of the olefin from the amino acid building block allows for migration of the substituted allyl group to occur. This allylic transposition reaction takes place in a conjugate addition, semipinacol-like fashion to yield a succinimide intermediate. Iterative two-electron oxidations of the C7 methyl of the succinimide intermediate to the carboxylic acid can be catalyzed by one of two remaining cytochrome P450 monooxygenasess poxC or poxD to yield oxaleimide A. Subsequent oxidation yields the maleimide scaffold oxaleimide I. Both oxaleimide A and oxaleimide I can undergo oxidative modifications in the decalin ring to yield the series of products oxaleimides B to H. The polypeptide is Hybrid PKS-NRPS synthetase poxE (Penicillium oxalicum (strain 114-2 / CGMCC 5302) (Penicillium decumbens)).